Here is a 238-residue protein sequence, read N- to C-terminus: Ribonuclease PH (238 aa).

Phosphate is bound by residues R86 and 124–126 (GTR).

The protein belongs to the RNase PH family. In terms of assembly, homohexameric ring arranged as a trimer of dimers.

The enzyme catalyses tRNA(n+1) + phosphate = tRNA(n) + a ribonucleoside 5'-diphosphate. Phosphorolytic 3'-5' exoribonuclease that plays an important role in tRNA 3'-end maturation. Removes nucleotide residues following the 3'-CCA terminus of tRNAs; can also add nucleotides to the ends of RNA molecules by using nucleoside diphosphates as substrates, but this may not be physiologically important. Probably plays a role in initiation of 16S rRNA degradation (leading to ribosome degradation) during starvation. The protein is Ribonuclease PH of Mesorhizobium japonicum (strain LMG 29417 / CECT 9101 / MAFF 303099) (Mesorhizobium loti (strain MAFF 303099)).